Here is a 351-residue protein sequence, read N- to C-terminus: tRNA pseudouridine synthase D (351 aa).

Aspartate 81 functions as the Nucleophile in the catalytic mechanism. The TRUD domain occupies 158 to 304; it reads GVPNYFGSQR…MRHERRAIEL (147 aa).

This sequence belongs to the pseudouridine synthase TruD family.

The enzyme catalyses uridine(13) in tRNA = pseudouridine(13) in tRNA. In terms of biological role, responsible for synthesis of pseudouridine from uracil-13 in transfer RNAs. The chain is tRNA pseudouridine synthase D from Aliivibrio fischeri (strain MJ11) (Vibrio fischeri).